The following is a 641-amino-acid chain: Chaperone protein DnaK (641 aa).

Position 199 is a phosphothreonine; by autocatalysis (Thr199). Positions 602-641 are disordered; sequence MYADQADQAQQAGGQEEGQAKSADDAVDAEFEEVKDDDKK. The span at 604-615 shows a compositional bias: low complexity; sequence ADQADQAQQAGG. Over residues 626-641 the composition is skewed to acidic residues; it reads DAVDAEFEEVKDDDKK.

Belongs to the heat shock protein 70 family.

Its function is as follows. Acts as a chaperone. The polypeptide is Chaperone protein DnaK (Marinobacter nauticus (strain ATCC 700491 / DSM 11845 / VT8) (Marinobacter aquaeolei)).